Here is a 233-residue protein sequence, read N- to C-terminus: uncharacterized protein (233 aa).

This is an uncharacterized protein from Acanthamoeba polyphaga (Amoeba).